A 285-amino-acid chain; its full sequence is Stress response regulator protein 1 (285 aa).

2 stretches are compositionally biased toward low complexity: residues 43–58 and 128–138; these read DTSS…SSNN and SIISSKSSNKS. Disordered regions lie at residues 43–66 and 114–142; these read DTSS…SDQQ and PLTP…TTVV. Residues 158–276 enclose the Response regulatory domain; it reads SFLIVDDNII…LDFMANSIDD (119 aa). Asp-209 is subject to 4-aspartylphosphate.

In terms of biological role, required for stress adaptation, morphogenesis and virulence. In Candida dubliniensis (strain CD36 / ATCC MYA-646 / CBS 7987 / NCPF 3949 / NRRL Y-17841) (Yeast), this protein is Stress response regulator protein 1 (SRR1).